Here is a 240-residue protein sequence, read N- to C-terminus: Small ribosomal subunit protein uS2 (240 aa).

It belongs to the universal ribosomal protein uS2 family. In terms of assembly, component of the small ribosomal subunit. Mature ribosomes consist of a small (40S) and a large (60S) subunit. The 40S subunit contains about 33 different proteins and 1 molecule of RNA (18S). The 60S subunit contains about 49 different proteins and 3 molecules of RNA (25S, 5.8S and 5S). Interacts with RPS21.

Its subcellular location is the cytoplasm. Functionally, required for the assembly and/or stability of the 40S ribosomal subunit. Required for the processing of the 20S rRNA-precursor to mature 18S rRNA in a late step of the maturation of 40S ribosomal subunits. This is Small ribosomal subunit protein uS2 from Enterocytozoon bieneusi (strain H348) (Microsporidian parasite).